The following is a 301-amino-acid chain: Protoheme IX farnesyltransferase (301 aa).

The next 8 helical transmembrane spans lie at V30 to I50, I55 to I75, A106 to P126, L127 to L147, W152 to A172, F177 to W197, A233 to V253, and F281 to I301.

The protein belongs to the UbiA prenyltransferase family. Protoheme IX farnesyltransferase subfamily.

It is found in the cell membrane. It carries out the reaction heme b + (2E,6E)-farnesyl diphosphate + H2O = Fe(II)-heme o + diphosphate. The protein operates within porphyrin-containing compound metabolism; heme O biosynthesis; heme O from protoheme: step 1/1. In terms of biological role, converts heme B (protoheme IX) to heme O by substitution of the vinyl group on carbon 2 of heme B porphyrin ring with a hydroxyethyl farnesyl side group. This chain is Protoheme IX farnesyltransferase, found in Sulfurisphaera tokodaii (strain DSM 16993 / JCM 10545 / NBRC 100140 / 7) (Sulfolobus tokodaii).